A 254-amino-acid chain; its full sequence is Aspartate/glutamate leucyltransferase (254 aa).

The protein belongs to the R-transferase family. Bpt subfamily.

The protein localises to the cytoplasm. The enzyme catalyses N-terminal L-glutamyl-[protein] + L-leucyl-tRNA(Leu) = N-terminal L-leucyl-L-glutamyl-[protein] + tRNA(Leu) + H(+). It carries out the reaction N-terminal L-aspartyl-[protein] + L-leucyl-tRNA(Leu) = N-terminal L-leucyl-L-aspartyl-[protein] + tRNA(Leu) + H(+). Functions in the N-end rule pathway of protein degradation where it conjugates Leu from its aminoacyl-tRNA to the N-termini of proteins containing an N-terminal aspartate or glutamate. This Mesorhizobium japonicum (strain LMG 29417 / CECT 9101 / MAFF 303099) (Mesorhizobium loti (strain MAFF 303099)) protein is Aspartate/glutamate leucyltransferase.